The following is a 138-amino-acid chain: ATP synthase epsilon chain (138 aa).

Belongs to the ATPase epsilon chain family. F-type ATPases have 2 components, CF(1) - the catalytic core - and CF(0) - the membrane proton channel. CF(1) has five subunits: alpha(3), beta(3), gamma(1), delta(1), epsilon(1). CF(0) has three main subunits: a, b and c.

The protein localises to the cell inner membrane. Its function is as follows. Produces ATP from ADP in the presence of a proton gradient across the membrane. This chain is ATP synthase epsilon chain, found in Geotalea uraniireducens (strain Rf4) (Geobacter uraniireducens).